The following is a 450-amino-acid chain: MFSFNLLTQYIIMRSLKKFFVKTYGCQMNELDSEIMIGQLENRGLTRSHDENDADLLIFNTCSIRDLAERKVMGKLGKLGLTKQSQAIIGVTGCMANAKKDSLFQKLPHIDFVLGTNNIHDLNHVLDEVLASGKQSIRTDDHFEFELDYLNAKREDQIKAYVSIIRGCDKFCTYCVVPYTRGSEVSRAPENILEECRHLVNQGYKEITLLGQNVNSYGKDKLEWKCLFHDLLYQLDKIPGLERVRFMTSHPVDISKELMEAIRDLKTLCEFVHFPLQAGSNRVLKKMHRIYTVEQYLEKVQMLKEIVPNVALGTDIIVGFPTETEEEFQETYRLLKEIEYSVAFLFSYSPRKGTPAMRWRDDVPEEVKQDRLQRLLQLQDTIYMKHRQAFLGQTVEVLVERRNFKDDRLVKGRTRCWKNVLFTGGDELVGTMQQVKIHGYSHQTLLGDLQ.

The MTTase N-terminal domain occupies 17–131 (KKFFVKTYGC…LNHVLDEVLA (115 aa)). Positions 26, 62, 94, 168, 172, and 175 each coordinate [4Fe-4S] cluster. The Radical SAM core domain occupies 154 to 385 (REDQIKAYVS…LQLQDTIYMK (232 aa)). The TRAM domain maps to 388–450 (QAFLGQTVEV…SHQTLLGDLQ (63 aa)).

The protein belongs to the methylthiotransferase family. MiaB subfamily. In terms of assembly, monomer. [4Fe-4S] cluster is required as a cofactor.

It is found in the cytoplasm. The enzyme catalyses N(6)-dimethylallyladenosine(37) in tRNA + (sulfur carrier)-SH + AH2 + 2 S-adenosyl-L-methionine = 2-methylsulfanyl-N(6)-dimethylallyladenosine(37) in tRNA + (sulfur carrier)-H + 5'-deoxyadenosine + L-methionine + A + S-adenosyl-L-homocysteine + 2 H(+). Functionally, catalyzes the methylthiolation of N6-(dimethylallyl)adenosine (i(6)A), leading to the formation of 2-methylthio-N6-(dimethylallyl)adenosine (ms(2)i(6)A) at position 37 in tRNAs that read codons beginning with uridine. In Protochlamydia amoebophila (strain UWE25), this protein is tRNA-2-methylthio-N(6)-dimethylallyladenosine synthase.